We begin with the raw amino-acid sequence, 205 residues long: Large ribosomal subunit protein uL4 (205 aa).

The segment at 43 to 95 (RSGNRAQKDRAEVKHSTKKPWRQKGTGRARAGMTSSPLWRGGGRAFPNSPEEN) is disordered. Positions 48-57 (AQKDRAEVKH) are enriched in basic and acidic residues. Over residues 58-69 (STKKPWRQKGTG) the composition is skewed to basic residues.

Belongs to the universal ribosomal protein uL4 family. In terms of assembly, part of the 50S ribosomal subunit.

Its function is as follows. One of the primary rRNA binding proteins, this protein initially binds near the 5'-end of the 23S rRNA. It is important during the early stages of 50S assembly. It makes multiple contacts with different domains of the 23S rRNA in the assembled 50S subunit and ribosome. Forms part of the polypeptide exit tunnel. This is Large ribosomal subunit protein uL4 from Bordetella pertussis (strain Tohama I / ATCC BAA-589 / NCTC 13251).